Here is a 375-residue protein sequence, read N- to C-terminus: DNA replication and repair protein RecF (375 aa).

30–37 provides a ligand contact to ATP; sequence GLNGQGKT.

Belongs to the RecF family.

It localises to the cytoplasm. The RecF protein is involved in DNA metabolism; it is required for DNA replication and normal SOS inducibility. RecF binds preferentially to single-stranded, linear DNA. It also seems to bind ATP. The chain is DNA replication and repair protein RecF from Halothermothrix orenii (strain H 168 / OCM 544 / DSM 9562).